Here is a 424-residue protein sequence, read N- to C-terminus: Serine--tRNA ligase (424 aa).

Residue 233–235 (TAE) participates in L-serine binding. ATP-binding positions include 264-266 (RRE) and Val-280. Position 287 (Glu-287) interacts with L-serine. Residue 351-354 (EISS) participates in ATP binding. Position 386 (Ser-386) interacts with L-serine.

The protein belongs to the class-II aminoacyl-tRNA synthetase family. Type-1 seryl-tRNA synthetase subfamily. As to quaternary structure, homodimer. The tRNA molecule binds across the dimer.

It localises to the cytoplasm. It catalyses the reaction tRNA(Ser) + L-serine + ATP = L-seryl-tRNA(Ser) + AMP + diphosphate + H(+). The enzyme catalyses tRNA(Sec) + L-serine + ATP = L-seryl-tRNA(Sec) + AMP + diphosphate + H(+). The protein operates within aminoacyl-tRNA biosynthesis; selenocysteinyl-tRNA(Sec) biosynthesis; L-seryl-tRNA(Sec) from L-serine and tRNA(Sec): step 1/1. Its function is as follows. Catalyzes the attachment of serine to tRNA(Ser). Is also able to aminoacylate tRNA(Sec) with serine, to form the misacylated tRNA L-seryl-tRNA(Sec), which will be further converted into selenocysteinyl-tRNA(Sec). The chain is Serine--tRNA ligase from Kosmotoga olearia (strain ATCC BAA-1733 / DSM 21960 / TBF 19.5.1).